The following is a 554-amino-acid chain: Phenylalanine--tRNA ligase beta subunit (554 aa).

A B5 domain is found at 276–351; it reads LSLKSRMISV…INYGYEKFEG (76 aa). Mg(2+)-binding residues include Asp-329, Asp-335, Glu-338, and Glu-339.

This sequence belongs to the phenylalanyl-tRNA synthetase beta subunit family. Type 2 subfamily. As to quaternary structure, tetramer of two alpha and two beta subunits. Mg(2+) is required as a cofactor.

It is found in the cytoplasm. It catalyses the reaction tRNA(Phe) + L-phenylalanine + ATP = L-phenylalanyl-tRNA(Phe) + AMP + diphosphate + H(+). This Methanococcus maripaludis (strain C5 / ATCC BAA-1333) protein is Phenylalanine--tRNA ligase beta subunit.